The chain runs to 446 residues: uncharacterized protein (446 aa).

4 helical membrane-spanning segments follow: residues 69–89 (FWLW…VTYL), 98–118 (FFLV…VWLA), 169–189 (HSLW…LLLV), and 247–267 (GLLV…AWVV).

It localises to the membrane. This is an uncharacterized protein from Neisseria meningitidis serogroup B (strain ATCC BAA-335 / MC58).